Here is a 311-residue protein sequence, read N- to C-terminus: Ribonuclease HIII (311 aa).

The 217-residue stretch at 95 to 311 (MSIVGSDEVG…NTEKAFRLLK (217 aa)) folds into the RNase H type-2 domain. Aspartate 101, glutamate 102, and aspartate 206 together coordinate a divalent metal cation.

This sequence belongs to the RNase HII family. RnhC subfamily. Mn(2+) serves as cofactor. It depends on Mg(2+) as a cofactor.

The protein resides in the cytoplasm. It catalyses the reaction Endonucleolytic cleavage to 5'-phosphomonoester.. Its function is as follows. Endonuclease that specifically degrades the RNA of RNA-DNA hybrids. This chain is Ribonuclease HIII, found in Bacillus cereus (strain AH187).